The sequence spans 462 residues: ATP synthase subunit beta (462 aa).

151-158 is an ATP binding site; that stretch reads GGAGVGKT.

The protein belongs to the ATPase alpha/beta chains family. In terms of assembly, F-type ATPases have 2 components, CF(1) - the catalytic core - and CF(0) - the membrane proton channel. CF(1) has five subunits: alpha(3), beta(3), gamma(1), delta(1), epsilon(1). CF(0) has four main subunits: a(1), b(1), b'(1) and c(9-12).

The protein resides in the cell inner membrane. It catalyses the reaction ATP + H2O + 4 H(+)(in) = ADP + phosphate + 5 H(+)(out). Its function is as follows. Produces ATP from ADP in the presence of a proton gradient across the membrane. The catalytic sites are hosted primarily by the beta subunits. The protein is ATP synthase subunit beta of Chlorobium limicola (strain DSM 245 / NBRC 103803 / 6330).